Consider the following 334-residue polypeptide: GTP 3',8-cyclase (334 aa).

One can recognise a Radical SAM core domain in the interval 11 to 236 (GFNRKIDYLR…ESTESSMGPA (226 aa)). GTP is bound at residue R20. [4Fe-4S] cluster contacts are provided by C27 and C31. Y33 contacts S-adenosyl-L-methionine. C34 is a [4Fe-4S] cluster binding site. Residue R69 coordinates GTP. Residue G73 participates in S-adenosyl-L-methionine binding. T100 is a binding site for GTP. An S-adenosyl-L-methionine-binding site is contributed by S124. K161 contributes to the GTP binding site. M195 is a binding site for S-adenosyl-L-methionine. Residues C260 and C263 each contribute to the [4Fe-4S] cluster site. 265–267 (RVR) contributes to the GTP binding site. C277 lines the [4Fe-4S] cluster pocket.

Belongs to the radical SAM superfamily. MoaA family. As to quaternary structure, monomer and homodimer. The cofactor is [4Fe-4S] cluster.

It catalyses the reaction GTP + AH2 + S-adenosyl-L-methionine = (8S)-3',8-cyclo-7,8-dihydroguanosine 5'-triphosphate + 5'-deoxyadenosine + L-methionine + A + H(+). The protein operates within cofactor biosynthesis; molybdopterin biosynthesis. Functionally, catalyzes the cyclization of GTP to (8S)-3',8-cyclo-7,8-dihydroguanosine 5'-triphosphate. This chain is GTP 3',8-cyclase, found in Pseudomonas putida (strain ATCC 47054 / DSM 6125 / CFBP 8728 / NCIMB 11950 / KT2440).